A 1221-amino-acid polypeptide reads, in one-letter code: MTDSTYDFGAVRDDLTPLEDDCKLLGSLLDDCLRVEIGETMFKKIERIRALAQCASNLSIKGDAGASDMLSHRLAEELMNLDMDEAVPLTRACGHYLNLSGIAELHHGVRRDRATREPNPNSCDAVFARLITEGVDPEELYRAVSEQNVEVVLTAHPTQVNRRTLQYKHTRIAALLQQHDRSDLTAEERRNMVSELQREVAALWQTDELRRQKPTPLDEARGGLHIVEQSLWAAVPQYMRRLSAALKKHTGHDLPLQATPFRFGSWMGGDRDGNPNVTAKVTAHVTALARWMAADLYLREIDTLRFELSMNQCSAAVWKMARRIIAEGHTKRAGVVRAKAAAALHQTATDAASHGGSAASAAAAAAAGGDVVADGTSGGGAAAAAGPAAAAAADDAFTFSRLGRPRPERPSTDVRSVGVLAGGEGAAFPGGMILGTQPVSAHTAAEVSVPHELPGQDVEGGSEMDFNESRRASDAGDLGASQHPMLGGPSAGASAEPTAHGYTTTATAAAAAADGTQPEPEVPGTPSYADPGTPDRLGALPGPFTPGPTPFREAANAAMSTAASGGAGGGGGGGANRAASGLGGDPTFTRRSLMAQRLGTSSVQFARAHEHPGFHPYRIVLGHVRDRLAATRRRMEDLLSGREPAGEAHGGVGAGGGGGGGAAPWYESEDELAEPLMACYWSLWECGGGVIADGRLLDLIRRVYTFGMCLMKLDLRQESTRHAEALDAVTSYLGLGSYLEWSEDQKIEWLTKELQGRRPLIPADMPMSAEVREVLDTFKVAAHLGRDNLGAYVISMTKGASDVMAVELLQREARMQVGAEAGGRGGGGPEDGGSLRVVPLFETLEDLDAAEDVMTRLLTNPWYREHLRAVHGDAQEVMLGYSDSGKDAGRLAANWALYKCQERLVAITKANNVKLTLFHGRGGTVGRGGGPTHIAIQSQPPGSVEGTFRITEQGEMVQAKFGISGVALSQLETYTTAVLLATMRPPSPPRREEWRAVMEMLSRVSCESYRNIVHHSPLFLRYFKHATPEAELGNLYIGSRPARRRNKDASISTLRAIPWIFAWTQNRLILPSWLGIGAALTAAMTQGHLPTLQAMYREWPFFGSTVDLIEMILAKTDPRIAALYEEVLVNDPEEKKLGAELRERLQRCQGAILKVTGHENLLSNNPTLSKLISMRSPFVDPINILQVEVLRRLRQDPNNMRLRDALLISINGIAAGMRNTG.

Residue histidine 156 is part of the active site. Disordered stretches follow at residues 443-588 and 642-661; these read TAAE…DPTF and REPAGEAHGGVGAGGGGGGG. Low complexity-rich tracts occupy residues 503–513 and 550–564; these read TTTATAAAAAA and PFREAANAAMSTAAS. Gly residues-rich tracts occupy residues 565 to 575 and 648 to 661; these read GGAGGGGGGGA and AHGGVGAGGGGGGG. The active site involves lysine 886.

It belongs to the PEPCase type 1 family. It depends on Mg(2+) as a cofactor.

It localises to the cytoplasm. The catalysed reaction is oxaloacetate + phosphate = phosphoenolpyruvate + hydrogencarbonate. Functionally, through the carboxylation of phosphoenolpyruvate (PEP) it forms oxaloacetate, a four-carbon dicarboxylic acid source for the tricarboxylic acid cycle. The polypeptide is Phosphoenolpyruvate carboxylase 2 (Chlamydomonas reinhardtii (Chlamydomonas smithii)).